We begin with the raw amino-acid sequence, 84 residues long: ATP synthase subunit c (84 aa).

2 helical membrane passes run 9–29 and 54–74; these read IIAS…GFAI and IVAG…LLFI.

The protein belongs to the ATPase C chain family. In terms of assembly, F-type ATPases have 2 components, F(1) - the catalytic core - and F(0) - the membrane proton channel. F(1) has five subunits: alpha(3), beta(3), gamma(1), delta(1), epsilon(1). F(0) has three main subunits: a(1), b(2) and c(10-14). The alpha and beta chains form an alternating ring which encloses part of the gamma chain. F(1) is attached to F(0) by a central stalk formed by the gamma and epsilon chains, while a peripheral stalk is formed by the delta and b chains.

It localises to the cell inner membrane. Its function is as follows. F(1)F(0) ATP synthase produces ATP from ADP in the presence of a proton or sodium gradient. F-type ATPases consist of two structural domains, F(1) containing the extramembraneous catalytic core and F(0) containing the membrane proton channel, linked together by a central stalk and a peripheral stalk. During catalysis, ATP synthesis in the catalytic domain of F(1) is coupled via a rotary mechanism of the central stalk subunits to proton translocation. Key component of the F(0) channel; it plays a direct role in translocation across the membrane. A homomeric c-ring of between 10-14 subunits forms the central stalk rotor element with the F(1) delta and epsilon subunits. The polypeptide is ATP synthase subunit c (Pasteurella multocida (strain Pm70)).